The following is a 553-amino-acid chain: Probable glucomannan 4-beta-mannosyltransferase 1 (553 aa).

The helical transmembrane segment at 64-84 (LLPVFKGLVVMCLVLSIIVFF) threads the bilayer. Residue aspartate 163 is part of the active site. 2 residues coordinate substrate: aspartate 222 and aspartate 224. The active site involves aspartate 316. The next 4 membrane-spanning stretches (helical) occupy residues 395–415 (VAVHFLTFFFYCIIVPTSVFF), 431–451 (LISIFHTLATPRSFYLVIFWV), 510–530 (EVMVGVYILGCALYGLIYGHT), and 531–551 (WLHFYLFLQATAFFVSGFGFV).

Belongs to the glycosyltransferase 2 family. Plant cellulose synthase-like A subfamily.

The protein localises to the golgi apparatus membrane. The enzyme catalyses GDP-mannose + (glucomannan)n = GDP + (glucomannan)n+1.. Its function is as follows. Probable mannan synthase which consists of a 4-beta-mannosyltransferase activity on mannan using GDP-mannose. The beta-1,4-mannan product is the backbone for galactomannan synthesis by galactomannan galactosyltransferase. Galactomannan is a noncellulosic polysaccharides of plant cell wall. This is Probable glucomannan 4-beta-mannosyltransferase 1 from Arabidopsis thaliana (Mouse-ear cress).